Reading from the N-terminus, the 198-residue chain is Probable septum site-determining protein MinC (198 aa).

Belongs to the MinC family. Interacts with MinD and FtsZ.

Cell division inhibitor that blocks the formation of polar Z ring septums. Rapidly oscillates between the poles of the cell to destabilize FtsZ filaments that have formed before they mature into polar Z rings. Prevents FtsZ polymerization. The polypeptide is Probable septum site-determining protein MinC (Thermosipho melanesiensis (strain DSM 12029 / CIP 104789 / BI429)).